The primary structure comprises 110 residues: uncharacterized protein (110 aa).

Over residues 1-20 the composition is skewed to polar residues; the sequence is MNQQNQKISNPQTPVPTTSE. The tract at residues 1–24 is disordered; it reads MNQQNQKISNPQTPVPTTSEMNDR.

This is an uncharacterized protein from Bacillus subtilis (strain 168).